We begin with the raw amino-acid sequence, 27 residues long: Pyruvate dehydrogenase protein X component, mitochondrial (27 aa).

Residues 1-27 (FRLSPAARNILEKHSLDASQGTATGPR) form a disordered region. The region spanning 2–27 (RLSPAARNILEKHSLDASQGTATGPR) is the Peripheral subunit-binding (PSBD) domain. K13 bears the N6-acetyllysine mark. A Phosphoserine modification is found at S15. A compositionally biased stretch (polar residues) spans 17-27 (DASQGTATGPR).

It belongs to the 2-oxoacid dehydrogenase family. As to quaternary structure, part of the inner core of the multimeric pyruvate dehydrogenase complex that is composed of about 48 DLAT and 12 PDHX molecules. This core binds multiple copies of pyruvate dehydrogenase (subunits PDH1A and PDHB, E1), dihydrolipoamide acetyltransferase (DLAT, E2) and lipoamide dehydrogenase (DLD, E3). Interacts with SIRT4. Interacts with DLD.

It localises to the mitochondrion matrix. Required for anchoring dihydrolipoamide dehydrogenase (E3) to the dihydrolipoamide transacetylase (E2) core of the pyruvate dehydrogenase complexes of eukaryotes. This specific binding is essential for a functional PDH complex. This chain is Pyruvate dehydrogenase protein X component, mitochondrial, found in Mesocricetus auratus (Golden hamster).